The chain runs to 350 residues: 4-hydroxy-3-methylbut-2-en-1-yl diphosphate synthase (flavodoxin) (350 aa).

Residues Cys-263, Cys-266, Cys-298, and Glu-305 each coordinate [4Fe-4S] cluster.

The protein belongs to the IspG family. Requires [4Fe-4S] cluster as cofactor.

The enzyme catalyses (2E)-4-hydroxy-3-methylbut-2-enyl diphosphate + oxidized [flavodoxin] + H2O + 2 H(+) = 2-C-methyl-D-erythritol 2,4-cyclic diphosphate + reduced [flavodoxin]. It participates in isoprenoid biosynthesis; isopentenyl diphosphate biosynthesis via DXP pathway; isopentenyl diphosphate from 1-deoxy-D-xylulose 5-phosphate: step 5/6. Its function is as follows. Converts 2C-methyl-D-erythritol 2,4-cyclodiphosphate (ME-2,4cPP) into 1-hydroxy-2-methyl-2-(E)-butenyl 4-diphosphate. In Nautilia profundicola (strain ATCC BAA-1463 / DSM 18972 / AmH), this protein is 4-hydroxy-3-methylbut-2-en-1-yl diphosphate synthase (flavodoxin).